A 361-amino-acid chain; its full sequence is Ribosomal RNA large subunit methyltransferase M (361 aa).

S-adenosyl-L-methionine contacts are provided by residues Ser-186, 219 to 222 (CPGG), Asp-238, Asp-258, and Asp-275. Lys-304 serves as the catalytic Proton acceptor.

This sequence belongs to the class I-like SAM-binding methyltransferase superfamily. RNA methyltransferase RlmE family. RlmM subfamily. In terms of assembly, monomer.

The protein resides in the cytoplasm. The enzyme catalyses cytidine(2498) in 23S rRNA + S-adenosyl-L-methionine = 2'-O-methylcytidine(2498) in 23S rRNA + S-adenosyl-L-homocysteine + H(+). Functionally, catalyzes the 2'-O-methylation at nucleotide C2498 in 23S rRNA. This chain is Ribosomal RNA large subunit methyltransferase M, found in Pseudoalteromonas translucida (strain TAC 125).